The primary structure comprises 637 residues: Conglutin beta 5 (637 aa).

Positions M1–G30 are cleaved as a signal peptide. Basic and acidic residues-rich tracts occupy residues D33–E105, R136–E174, and D184–E203. Disordered regions lie at residues D33 to S221 and E384 to N439. Residues Y217 to Q375 form the Cupin type-1 1 domain. Positions E389–K417 are enriched in basic and acidic residues. The 161-residue stretch at F434 to E594 folds into the Cupin type-1 2 domain. N544 is a glycosylation site (N-linked (GlcNAc...) asparagine). The segment covering A606–Q615 has biased composition (low complexity). The disordered stretch occupies residues A606–R626.

Belongs to the 7S seed storage protein family. In terms of assembly, component of globulins complexes which accumulate in seeds.

Its function is as follows. Seed storage protein. Accumulates during seed development and is hydrolyzed after germination to provide a carbon and nitrogen source for the developing seedling. In Lupinus angustifolius (Narrow-leaved blue lupine), this protein is Conglutin beta 5.